A 195-amino-acid polypeptide reads, in one-letter code: Myelin basic protein (195 aa).

Position 2 is an N-acetylalanine (Ala2). Ser8 and Ser13 each carry phosphoserine. Tyr15 carries the phosphotyrosine modification. Thr18 bears the Phosphothreonine mark. Ser20 bears the Phosphoserine mark. Thr21 carries the post-translational modification Phosphothreonine. Arg26 and Arg32 each carry citrulline. Phosphothreonine is present on Thr36. Ser41 carries the post-translational modification Phosphoserine. An omega-N-methylarginine mark is found at Arg44 and Arg50. Residues 45-79 form a disordered region; that stretch reads FFSGDRGAPKRGSGKVPWLKQSRSPLPSHARSRPG. At Ser57 the chain carries Phosphoserine. A Phosphothreonine modification is found at Thr92. Tyr94 is modified (phosphotyrosine). Ser101 bears the Phosphoserine mark. Phosphothreonine occurs at positions 104, 119, and 122. The tract at residues 117–139 is disordered; sequence IVTPRTPPPSQGKGRGLSLSRFS. Residue Gln127 is modified to Deamidated glutamine. Arg131 carries the omega-N-methylarginine; alternate modification. Arg131 is subject to Symmetric dimethylarginine; alternate. Ser139 bears the Phosphoserine mark. Lys146 is subject to N6-acetyllysine. A Citrulline modification is found at Arg154. A Deamidated glutamine modification is found at Gln172. At Arg184 the chain carries Citrulline. The residue at position 186 (Ser186) is a Phosphoserine. Ser190 is subject to Phosphoserine; by UHMK1. Arg195 carries the post-translational modification Citrulline.

It belongs to the myelin basic protein family. Homodimer. Post-translationally, as in other animals, several charge isomers may be produced as a result of optional post-translational modifications, such as phosphorylation of serine or threonine residues, deamidation of glutamine or asparagine residues, citrullination and methylation of arginine residues. In terms of processing, arg-131 was found to be 44% monomethylated and 11% symmetrically dimethylated. Phosphorylated by TAOK2, VRK2, MAPK11, MAPK12, MAPK14 and MINK1. Post-translationally, proteolytically cleaved in B cell lysosomes by cathepsin CTSG which degrades the major immunogenic MBP epitope and prevents the activation of MBP-specific autoreactive T cells. As to expression, found in both the central and the peripheral nervous system.

It localises to the myelin membrane. Its function is as follows. Is, with PLP, the most abundant protein component of the myelin membrane in the CNS. Has a role in both the formation and stabilization of this compact multilayer arrangement of bilayers. Each splice variant and charge isomer may have a specialized function in the assembly of an optimized, biochemically functional myelin membrane. The protein is Myelin basic protein (Mbp) of Rattus norvegicus (Rat).